A 162-amino-acid polypeptide reads, in one-letter code: RNA pyrophosphohydrolase (162 aa).

A Nudix hydrolase domain is found at 7-149 (KYRPCVGIML…KKEVYKTVIE (143 aa)). The Nudix box signature appears at 40 to 61 (GGVDDGEELEQAALRELLEEVG).

This sequence belongs to the Nudix hydrolase family. RppH subfamily. The cofactor is a divalent metal cation.

Functionally, accelerates the degradation of transcripts by removing pyrophosphate from the 5'-end of triphosphorylated RNA, leading to a more labile monophosphorylated state that can stimulate subsequent ribonuclease cleavage. The chain is RNA pyrophosphohydrolase from Wolbachia sp. subsp. Drosophila simulans (strain wRi).